The primary structure comprises 231 residues: Ribosyldihydronicotinamide dehydrogenase [quinone] (231 aa).

Residues His12 and 18–21 each bind FAD; that span reads FNGS. Ser80 carries the post-translational modification Phosphoserine. 104–107 contacts FAD; it reads LYWF. 127–129 is a substrate binding site; it reads FDI. FAD is bound by residues 148–151 and Tyr156; that span reads TTGG. Residues His174 and His178 each coordinate Zn(2+). Glu194 serves as a coordination point for FAD. The residue at position 197 (Ser197) is a Phosphoserine. Residue Arg201 coordinates FAD. A Zn(2+)-binding site is contributed by Cys223.

The protein belongs to the NAD(P)H dehydrogenase (quinone) family. Homodimer. It depends on Zn(2+) as a cofactor. Requires FAD as cofactor.

Its subcellular location is the cytoplasm. The enzyme catalyses 1-(beta-D-ribofuranosyl)-1,4-dihydronicotinamide + a quinone + H(+) = beta-nicotinamide D-riboside + a quinol. Its activity is regulated as follows. Inhibited by melatonin, resveratrol and 5-hydroxytryptamine. Functionally, the enzyme apparently serves as a quinone reductase in connection with conjugation reactions of hydroquinones involved in detoxification pathways as well as in biosynthetic processes such as the vitamin K-dependent gamma-carboxylation of glutamate residues in prothrombin synthesis. This chain is Ribosyldihydronicotinamide dehydrogenase [quinone] (NQO2), found in Homo sapiens (Human).